We begin with the raw amino-acid sequence, 1276 residues long: Probable outer membrane protein pmp6 (1276 aa).

A signal peptide spans 1 to 23 (MKYSLPWLLTSSALVFSLHPLMA). Residues 981–1276 (DAPSHPGIWI…NANCGTRYSF (296 aa)) enclose the Autotransporter domain.

Belongs to the PMP outer membrane protein family.

The protein resides in the secreted. It localises to the cell wall. The protein localises to the cell outer membrane. This chain is Probable outer membrane protein pmp6 (pmp6), found in Chlamydia pneumoniae (Chlamydophila pneumoniae).